The following is a 267-amino-acid chain: Phosphonates import ATP-binding protein PhnC 2 (267 aa).

The ABC transporter domain maps to 3-247; it reads LSLDGVDLVH…ALDALYANEQ (245 aa). 36–43 lines the ATP pocket; the sequence is GPSGAGKT.

The protein belongs to the ABC transporter superfamily. Phosphonates importer (TC 3.A.1.9.1) family. In terms of assembly, the complex is composed of two ATP-binding proteins (PhnC), two transmembrane proteins (PhnE) and a solute-binding protein (PhnD).

It is found in the cell inner membrane. It carries out the reaction phosphonate(out) + ATP + H2O = phosphonate(in) + ADP + phosphate + H(+). Part of the ABC transporter complex PhnCDE involved in phosphonates import. Responsible for energy coupling to the transport system. This Pseudomonas aeruginosa (strain UCBPP-PA14) protein is Phosphonates import ATP-binding protein PhnC 2.